The sequence spans 553 residues: Fusion glycoprotein F0 (553 aa).

Residues 1–31 (MGSRSSTRIPVPLMLTVRVMLALSCVCPTSA) form the signal peptide. Residues 32–500 (LDGRPLAAAG…VNVKLTSTSA (469 aa)) are Extracellular-facing. Disulfide bonds link Cys-76–Cys-199, Cys-362–Cys-370, Cys-394–Cys-399, and Cys-401–Cys-424. N-linked (GlcNAc...) asparagine; by host glycosylation is present at Asn-85. Positions 117 to 141 (LIGAIIGGVALGVATAAQITAASAL) are fusion peptide. Residues 142 to 170 (IQANQNAANILLLKESIAATNEAVHEVTN) are a coiled coil. N-linked (GlcNAc...) asparagine; by host glycans are attached at residues Asn-191 and Asn-366. Residues Asn-447 and Asn-471 are each glycosylated (N-linked (GlcNAc...) asparagine; by host). The stretch at 466–491 (ELGNVNNSISNALDKLEESNSKLDKV) forms a coiled coil. Residues 501 to 521 (LITYIVLTVISLVCGILSLVL) form a helical membrane-spanning segment. At 522 to 553 (ACYLMYKQKAQQKTLLWLGNNTLDQMRATTKM) the chain is on the cytoplasmic side. Cys-523 carries S-palmitoyl cysteine; by host lipidation.

The protein belongs to the paramyxoviruses fusion glycoprotein family. In terms of assembly, homotrimer of disulfide-linked F1-F2. Post-translationally, the inactive precursor F0 is glycosylated and proteolytically cleaved into F1 and F2 to be functionally active. The cleavage is mediated by cellular proteases during the transport and maturation of the polypeptide.

Its subcellular location is the virion membrane. The protein resides in the host cell membrane. Its function is as follows. Class I viral fusion protein. Under the current model, the protein has at least 3 conformational states: pre-fusion native state, pre-hairpin intermediate state, and post-fusion hairpin state. During viral and plasma cell membrane fusion, the heptad repeat (HR) regions assume a trimer-of-hairpins structure, positioning the fusion peptide in close proximity to the C-terminal region of the ectodomain. The formation of this structure appears to drive apposition and subsequent fusion of viral and plasma cell membranes. Directs fusion of viral and cellular membranes leading to delivery of the nucleocapsid into the cytoplasm. This fusion is pH independent and occurs directly at the outer cell membrane. The trimer of F1-F2 (F protein) probably interacts with HN at the virion surface. Upon HN binding to its cellular receptor, the hydrophobic fusion peptide is unmasked and interacts with the cellular membrane, inducing the fusion between cell and virion membranes. Later in infection, F proteins expressed at the plasma membrane of infected cells could mediate fusion with adjacent cells to form syncytia, a cytopathic effect that could lead to tissue necrosis. The protein is Fusion glycoprotein F0 (F) of Newcastle disease virus (strain Queensland/66) (NDV).